The chain runs to 349 residues: PDZ and LIM domain protein 2 (349 aa).

The 84-residue stretch at 1-84 (MALTVDVAGP…PLRLQLDRSQ (84 aa)) folds into the PDZ domain. Positions 74-147 (SPLRLQLDRS…TPPPTSPVAL (74 aa)) are disordered. Polar residues predominate over residues 81–94 (DRSQTASPGQTNGE). Ser124, Ser127, Ser129, Ser134, and Ser137 each carry phosphoserine. 2 positions are modified to phosphothreonine: Thr138 and Thr142. Phosphoserine occurs at positions 143 and 163. The segment at 169-212 (AHHLTYPGHPTSQQAGHSSPSDSAVRVLLHSPGRPSSPRFSSLD) is disordered. Residues 178–190 (PTSQQAGHSSPSD) show a composition bias toward polar residues. Residues Ser199, Ser204, Ser205, Ser209, Ser210, and Ser263 each carry the phosphoserine modification. A compositionally biased stretch (low complexity) spans 199-210 (SPGRPSSPRFSS). Positions 281–341 (HTCEKCSVNI…EKHARQRYSM (61 aa)) constitute an LIM zinc-binding domain.

As to quaternary structure, interacts with alpha-actinins ACTN1 and ACTN4, FLNA and MYH9. Interacts (via LIM zinc-binding domain) with MKRN2. Highly expressed in lung. Expressed at intermediate level in kidney, testis and spleen. Weakly expressed in heart and brain.

Its subcellular location is the cytoplasm. It localises to the cytoskeleton. Its function is as follows. Probable adapter protein located at the actin cytoskeleton that promotes cell attachment. Necessary for the migratory capacity of epithelial cells. Overexpression enhances cell adhesion to collagen and fibronectin and suppresses anchorage independent growth. May contribute to tumor cell migratory capacity. In Mus musculus (Mouse), this protein is PDZ and LIM domain protein 2 (Pdlim2).